A 79-amino-acid chain; its full sequence is D-alanyl carrier protein (79 aa).

Residues 1-77 form the Carrier domain; it reads MSIEETVIEL…KIVQGVEELQ (77 aa). Serine 35 carries the O-(pantetheine 4'-phosphoryl)serine modification.

The protein belongs to the DltC family. 4'-phosphopantetheine is transferred from CoA to a specific serine of apo-DCP.

It is found in the cytoplasm. It participates in cell wall biogenesis; lipoteichoic acid biosynthesis. Carrier protein involved in the D-alanylation of lipoteichoic acid (LTA). The loading of thioester-linked D-alanine onto DltC is catalyzed by D-alanine--D-alanyl carrier protein ligase DltA. The DltC-carried D-alanyl group is further transferred to cell membrane phosphatidylglycerol (PG) by forming an ester bond, probably catalyzed by DltD. D-alanylation of LTA plays an important role in modulating the properties of the cell wall in Gram-positive bacteria, influencing the net charge of the cell wall. The chain is D-alanyl carrier protein from Streptococcus pyogenes serotype M1.